The primary structure comprises 629 residues: Embryonic polyadenylate-binding protein B (629 aa).

4 RRM domains span residues 11–89 (ASLY…WSQR), 99–175 (GNVF…HFKS), 191–268 (TNVY…RAQK), and 294–370 (VNLY…LAQR). The 78-residue stretch at 539–616 (QEPLTASLLA…AVAVLQAHQA (78 aa)) folds into the PABC domain.

This sequence belongs to the polyadenylate-binding protein type-1 family. As to quaternary structure, interacts with dazl in an RNA-independent manner. The C-terminus can self-associate and also interact with the C-terminus of pabpc1, independently of RNA. RRM 1 and RRM 2 interact with both eif4g1 and paip1, and the C-terminus also interacts with paip1. Prior to oocyte maturation, found in a complex with dazl and pum2 proteins and spdy1 mRNA; pum2 dissociates from the complex during maturation. Interacts with the translation termination factor sup35/erf3.

The protein resides in the cytoplasm. Binds and protects the poly(A) tail of mRNA with or without an AU-rich element (ARE) and prevents mRNA deadenylation. Stimulates the translation of mRNAs to which it is bound during early development. In Xenopus laevis (African clawed frog), this protein is Embryonic polyadenylate-binding protein B (epabp-b).